The sequence spans 376 residues: NIF3-like protein 1 (376 aa).

An N6-acetyllysine modification is found at K108. Residues L243–V376 form a mediates interaction with COPS2 region. Phosphothreonine is present on T254. Phosphoserine is present on S258.

It belongs to the GTP cyclohydrolase I type 2/NIF3 family. As to quaternary structure, homodimer. Interacts with COPS2. Interacts with THOC7. Ubiquitous. Detected in all tissues tested with higher expression in cerebellum, heart and kidney and to a lower level in cerebrum, lung, liver, spleen and muscle.

Its subcellular location is the cytoplasm. It localises to the nucleus. Its function is as follows. May function as a transcriptional corepressor through its interaction with COPS2, negatively regulating the expression of genes involved in neuronal differentiation. In Mus musculus (Mouse), this protein is NIF3-like protein 1.